Consider the following 381-residue polypeptide: Molybdenum import ATP-binding protein ModC (381 aa).

The ABC transporter domain occupies 5-238; the sequence is SRSIQAQFRG…PALPLAASRD (234 aa). 37–44 provides a ligand contact to ATP; sequence GPSGCGKS. The Mop domain maps to 297-367; sequence NTSILNVLPA…VKGVALAPGR (71 aa).

This sequence belongs to the ABC transporter superfamily. Molybdate importer (TC 3.A.1.8) family. The complex is composed of two ATP-binding proteins (ModC), two transmembrane proteins (ModB) and a solute-binding protein (ModA).

It is found in the cell inner membrane. It carries out the reaction molybdate(out) + ATP + H2O = molybdate(in) + ADP + phosphate + H(+). Its function is as follows. Part of the ABC transporter complex ModABC involved in molybdenum import. Responsible for energy coupling to the transport system. The chain is Molybdenum import ATP-binding protein ModC from Rhodopseudomonas palustris (strain BisB18).